The chain runs to 128 residues: Hemoglobin subunit beta-1 (128 aa).

Positions 2–128 constitute a Globin domain; sequence HWTAEEKALV…VVDALSKGYH (127 aa). The heme b site is built by histidine 51 and histidine 74.

It belongs to the globin family. As to quaternary structure, hb 1 is a heterotetramer of two alpha and two beta-1 chains. In terms of tissue distribution, red blood cells (at protein level).

Involved in oxygen transport from gills to the various peripheral tissues. In Somniosus microcephalus (Greenland sleeper shark), this protein is Hemoglobin subunit beta-1.